Consider the following 144-residue polypeptide: Eukaryotic translation initiation factor 1A, X-chromosomal (144 aa).

A compositionally biased stretch (basic residues) spans 1 to 15 (MPKNKGKGGKNRRRG). 2 disordered regions span residues 1–26 (MPKN…KREL) and 114–144 (KINE…IDDI). The segment covering 16 to 26 (KNENESEKREL) has biased composition (basic and acidic residues). An S1-like domain is found at 22 to 96 (EKRELVFKED…NKADVILKYN (75 aa)). Acidic residues predominate over residues 124–144 (GDDDEIQFDDIGDDDEDIDDI).

It belongs to the eIF-1A family. Component of the 43S pre-initiation complex (43S PIC), which is composed of the 40S ribosomal subunit, EIF1, eIF1A (EIF1AX), eIF3 complex, EIF5 and eIF2-GTP-initiator tRNA complex (eIF2 ternary complex). Interacts with EIF5; this interaction contributes to the maintenance of EIF1 within the open 43S PIC. Interacts through its C-terminal domain (CTD) with the CTD of EIF5B; from the location of the start codon by the 43S complex until the formation of the 80S complex. As to quaternary structure, (Microbial infection) Interacts with human respiratory syncytial virus (HRSV) nucleoprotein; this interaction recruits EIF1AX to the viral replication complex to facilitate viral genomic RNA synthesis and virus production.

The protein localises to the cytoplasm. Its function is as follows. Component of the 43S pre-initiation complex (43S PIC), which binds to the mRNA cap-proximal region, scans mRNA 5'-untranslated region, and locates the initiation codon. This protein enhances formation of the cap-proximal complex. Together with EIF1, facilitates scanning, start codon recognition, promotion of the assembly of 48S complex at the initiation codon (43S PIC becomes 48S PIC after the start codon is reached), and dissociation of aberrant complexes. After start codon location, together with EIF5B orients the initiator methionine-tRNA in a conformation that allows 60S ribosomal subunit joining to form the 80S initiation complex. Is released after 80S initiation complex formation, just after GTP hydrolysis by EIF5B, and before release of EIF5B. Its globular part is located in the A site of the 40S ribosomal subunit. Its interaction with EIF5 during scanning contribute to the maintenance of EIF1 within the open 43S PIC. In contrast to yeast orthologs, does not bind EIF1. This Homo sapiens (Human) protein is Eukaryotic translation initiation factor 1A, X-chromosomal (EIF1AX).